A 378-amino-acid polypeptide reads, in one-letter code: Mannitol-1-phosphate 5-dehydrogenase (378 aa).

4-15 (SVHFGAGNIGRG) contributes to the NAD(+) binding site.

Belongs to the mannitol dehydrogenase family.

It carries out the reaction D-mannitol 1-phosphate + NAD(+) = beta-D-fructose 6-phosphate + NADH + H(+). The sequence is that of Mannitol-1-phosphate 5-dehydrogenase from Streptococcus pneumoniae (strain ATCC 700669 / Spain 23F-1).